Reading from the N-terminus, the 432-residue chain is MRKPFYKILYVQVLFAICVGILLGHYWPDTGVAMKPLGDGFIKLIKMIIGPIIFCTVVTGIAGMSDMKKVGRVGGKALLYFEVVSTFALLIGLGAAHLLKPGVGFNIDPATLDTKAIAQYVSKAHGQSTVEFLMHIIPDTVFSAFANGDILQILLVSLFFGAALAVLGERARIVVQLIEQVSKVFFHIVHVITKVAPIGAFGAMAFTIGKYGLGSLVPLLKLIGTFYFTAIIFVLVVLGTIARMTGFSIVRFISYIKEELLIVLGTSSSEAALPHMMEKLEKLGCSRSVVGLVVPTGYSFNLDGTNIYMTMAVIFIAQATGIELTLMQQLTILAVAMITSKGASGVTGSGFITLAATLAVVPTIPVAGMVLILGIDRFMSECRALTNIIGNGVATVVVSAWERELDRKRLASVLNGGSGDVADLADVGQGVR.

Transmembrane regions (helical) follow at residues 8–28 (ILYV…HYWP), 44–64 (LIKM…IAGM), 78–98 (LLYF…AAHL), 148–168 (GDIL…AVLG), 188–208 (IVHV…AFTI), 222–242 (LIGT…GTIA), 307–327 (IYMT…LTLM), and 355–375 (AATL…ILGI).

Belongs to the dicarboxylate/amino acid:cation symporter (DAACS) (TC 2.A.23) family.

The protein resides in the cell inner membrane. Its function is as follows. Responsible for the transport of dicarboxylates such as succinate, fumarate, and malate from the periplasm across the membrane. The protein is C4-dicarboxylate transport protein of Cupriavidus necator (strain ATCC 17699 / DSM 428 / KCTC 22496 / NCIMB 10442 / H16 / Stanier 337) (Ralstonia eutropha).